A 499-amino-acid polypeptide reads, in one-letter code: Glycerol kinase (499 aa).

Residue Thr12 participates in ADP binding. ATP contacts are provided by Thr12, Thr13, and Ser14. Thr12 is a binding site for sn-glycerol 3-phosphate. Residue Arg16 participates in ADP binding. Sn-glycerol 3-phosphate contacts are provided by Arg82, Glu83, Tyr134, and Asp245. Glycerol is bound by residues Arg82, Glu83, Tyr134, Asp245, and Gln246. ADP contacts are provided by Thr267 and Gly311. Residues Thr267, Gly311, Gln315, and Gly412 each coordinate ATP. The ADP site is built by Gly412 and Asn416.

The protein belongs to the FGGY kinase family.

The enzyme catalyses glycerol + ATP = sn-glycerol 3-phosphate + ADP + H(+). The protein operates within polyol metabolism; glycerol degradation via glycerol kinase pathway; sn-glycerol 3-phosphate from glycerol: step 1/1. With respect to regulation, inhibited by fructose 1,6-bisphosphate (FBP). Key enzyme in the regulation of glycerol uptake and metabolism. Catalyzes the phosphorylation of glycerol to yield sn-glycerol 3-phosphate. This Brucella anthropi (strain ATCC 49188 / DSM 6882 / CCUG 24695 / JCM 21032 / LMG 3331 / NBRC 15819 / NCTC 12168 / Alc 37) (Ochrobactrum anthropi) protein is Glycerol kinase.